The sequence spans 389 residues: S-adenosylmethionine synthase (389 aa).

His19 is a binding site for ATP. Residue Asp21 participates in Mg(2+) binding. Residue Glu47 participates in K(+) binding. L-methionine is bound by residues Glu60 and Gln103. The interval 103–113 (QSVDIAQGVDR) is flexible loop. ATP contacts are provided by residues 168-170 (DGK), 234-235 (RF), Asp243, 249-250 (RK), Ala266, and Lys270. An L-methionine-binding site is contributed by Asp243. Lys274 serves as a coordination point for L-methionine.

This sequence belongs to the AdoMet synthase family. As to quaternary structure, homotetramer; dimer of dimers. Mg(2+) is required as a cofactor. It depends on K(+) as a cofactor.

It localises to the cytoplasm. It catalyses the reaction L-methionine + ATP + H2O = S-adenosyl-L-methionine + phosphate + diphosphate. Its pathway is amino-acid biosynthesis; S-adenosyl-L-methionine biosynthesis; S-adenosyl-L-methionine from L-methionine: step 1/1. Its function is as follows. Catalyzes the formation of S-adenosylmethionine (AdoMet) from methionine and ATP. The overall synthetic reaction is composed of two sequential steps, AdoMet formation and the subsequent tripolyphosphate hydrolysis which occurs prior to release of AdoMet from the enzyme. The protein is S-adenosylmethionine synthase of Maridesulfovibrio salexigens (strain ATCC 14822 / DSM 2638 / NCIMB 8403 / VKM B-1763) (Desulfovibrio salexigens).